We begin with the raw amino-acid sequence, 355 residues long: NADH dehydrogenase-like protein YutJ (355 aa).

Belongs to the NADH dehydrogenase family. The cofactor is FAD.

The sequence is that of NADH dehydrogenase-like protein YutJ (yutJ) from Bacillus subtilis (strain 168).